The sequence spans 303 residues: Protease HtpX (303 aa).

Transmembrane regions (helical) follow at residues 4-24 (IGLF…VFGI) and 42-62 (IASL…ISLF). H149 lines the Zn(2+) pocket. E150 is an active-site residue. H153 contacts Zn(2+). 2 helical membrane passes run 157 to 177 (GDMV…MFFA) and 200 to 220 (FVTS…IVMW). Zn(2+) is bound at residue E226.

The protein belongs to the peptidase M48B family. Zn(2+) serves as cofactor.

It localises to the cell inner membrane. This Psychrobacter sp. (strain PRwf-1) protein is Protease HtpX.